The sequence spans 226 residues: ATP synthase subunit a (226 aa).

5 helical membrane-spanning segments follow: residues 20-40, 74-94, 100-120, 162-182, and 187-207; these read LNWFSTFIGLLIIPSTFWLMP, FVSLFSLIMFNNFLGLFPYIF, LTLTLTLAFPLWLSFMLYGWI, LTANMIAGHLLMTLLGNTGPM, and IILSMILITQIALLVLESAVA.

This sequence belongs to the ATPase A chain family. In terms of assembly, F-type ATPases have 2 components, CF(1) - the catalytic core - and CF(0) - the membrane proton channel. CF(1) has five subunits: alpha(3), beta(3), gamma(1), delta(1), epsilon(1). CF(0) has three main subunits: a, b and c.

It localises to the mitochondrion inner membrane. In terms of biological role, mitochondrial membrane ATP synthase (F(1)F(0) ATP synthase or Complex V) produces ATP from ADP in the presence of a proton gradient across the membrane which is generated by electron transport complexes of the respiratory chain. F-type ATPases consist of two structural domains, F(1) - containing the extramembraneous catalytic core and F(0) - containing the membrane proton channel, linked together by a central stalk and a peripheral stalk. During catalysis, ATP synthesis in the catalytic domain of F(1) is coupled via a rotary mechanism of the central stalk subunits to proton translocation. Key component of the proton channel; it may play a direct role in the translocation of protons across the membrane. The chain is ATP synthase subunit a (mt:ATPase6) from Aedes albopictus (Asian tiger mosquito).